A 254-amino-acid chain; its full sequence is Alcohol dehydrogenase (254 aa).

An NAD(+)-binding site is contributed by F10–L33. A substrate-binding site is contributed by S138. Y151 functions as the Proton acceptor in the catalytic mechanism.

Belongs to the short-chain dehydrogenases/reductases (SDR) family. As to quaternary structure, homodimer.

The enzyme catalyses a primary alcohol + NAD(+) = an aldehyde + NADH + H(+). The catalysed reaction is a secondary alcohol + NAD(+) = a ketone + NADH + H(+). This chain is Alcohol dehydrogenase (Adh), found in Drosophila grimshawi (Hawaiian fruit fly).